Here is a 471-residue protein sequence, read N- to C-terminus: uncharacterized protein (471 aa).

The disordered stretch occupies residues 13–57; it reads KGGATIGATPMESDSSVSALSGSSASKVSRRGRRRSHLASKSSAP. The segment covering 27 to 39 has biased composition (low complexity); that stretch reads SSVSALSGSSASK. A compositionally biased stretch (basic residues) spans 40 to 50; that stretch reads VSRRGRRRSHL. CCHC-type zinc fingers lie at residues 397 to 414 and 417 to 434; these read YACH…ECRQ and SVCR…KCQN. A gag-like cysteine motif region spans residues 438-457; sequence CRNCRHRGQPSGHYMLSNAC.

This sequence to corresponding ORF of B.mori (R1BM).

This is an uncharacterized protein from Drosophila melanogaster (Fruit fly).